Here is an 898-residue protein sequence, read N- to C-terminus: Vacuolar membrane protease (898 aa).

Topologically, residues 1-14 are cytoplasmic; the sequence is MGIVDYLVAAVSFR. A helical transmembrane segment spans residues 15 to 35; the sequence is TLPTTFVAVLVYLAIFISVLI. Residues 36-342 lie on the Vacuolar side of the membrane; the sequence is TDELPATPKD…LFGQALIVFP (307 aa). 3 N-linked (GlcNAc...) asparagine glycosylation sites follow: Asn-50, Asn-103, and Asn-110. Residues His-139 and Asp-151 each contribute to the Zn(2+) site. Catalysis depends on Glu-183, which acts as the Proton acceptor. Glu-184 is a Zn(2+) binding site. Asn-200 carries N-linked (GlcNAc...) asparagine glycosylation. 2 residues coordinate Zn(2+): Glu-209 and His-284. A helical membrane pass occupies residues 343-365; it reads LSAMITFNIVFLVVGPIMLALLV. Residues 366–411 lie on the Cytoplasmic side of the membrane; sequence TFDIVARHRRQEMIGGGYEEQGFFARAWTSFKSFRWVGGFWKHAKF. The helical transmembrane segment at 412–432 threads the bilayer; it reads WVALAVTVGLQVLLCVGYLYI. A topological domain (vacuolar) is located at residue Asn-433. Residues 434-454 traverse the membrane as a helical segment; it reads PLIAYSSSHIVLLSFLSLAYL. The Cytoplasmic segment spans residues 455–479; sequence STYLVHNIPSPTDTYGSHLPEQQKQ. A helical transmembrane segment spans residues 480-500; it reads AALFQLYFFTWILLLAATVVG. Residues 501–509 are Vacuolar-facing; it reads AKLSVGSFY. Residues 510-530 form a helical membrane-spanning segment; it reads ILSLWNAVLFAACAIGSIAGL. Over 531–593 the chain is Cytoplasmic; that stretch reads LSSHTVEGDA…PGGKEGEEVS (63 aa). A helical transmembrane segment spans residues 594–614; the sequence is GAIGWWFVQFVLSVPAVVILV. At 615–635 the chain is on the vacuolar side; that stretch reads SQLALLMLAATEQTLADGSPA. Residues 636-656 form a helical membrane-spanning segment; sequence VTVYGGASLMSVLAILPLAPF. At 657–664 the chain is on the cytoplasmic side; it reads ACKLHRRV. Residues 665–685 traverse the membrane as a helical segment; the sequence is AYVALVVLIASTAYAWLVFPF. At 686–898 the chain is on the vacuolar side; the sequence is SERAPLKVFF…LVEGYKAFAV (213 aa). Asn-704, Asn-733, and Asn-764 each carry an N-linked (GlcNAc...) asparagine glycan.

It belongs to the peptidase M28 family. Requires Zn(2+) as cofactor.

Its subcellular location is the vacuole membrane. In terms of biological role, may be involved in vacuolar sorting and osmoregulation. This is Vacuolar membrane protease from Schizophyllum commune (strain H4-8 / FGSC 9210) (Split gill fungus).